We begin with the raw amino-acid sequence, 131 residues long: C-type natriuretic peptide 2 (131 aa).

An N-terminal signal peptide occupies residues 1–22; that stretch reads MLYPALLCAALLLIAPLGHTEG. A propeptide spanning residues 23–109 is cleaved from the precursor; it reads RTLYPSPDAI…KRAVTDRSRR (87 aa). A disulfide bond links C115 and C131.

Belongs to the natriuretic peptide family. Expressed in brain and to a low extent in atrium.

The protein resides in the secreted. Its function is as follows. Exhibits natriuretic and vasodepressor activity. Has a cGMP-stimulating activity. In Oncorhynchus mykiss (Rainbow trout), this protein is C-type natriuretic peptide 2.